The following is a 193-amino-acid chain: Ion-translocating oxidoreductase complex subunit A (193 aa).

The next 6 helical transmembrane spans lie at 5 to 25, 47 to 67, 72 to 92, 102 to 122, 134 to 154, and 171 to 191; these read LLLFVGTVLVNNFVLVKFLGL, FVMTLASICAWLIDTWILIPL, LRTLSFILVIAVVVQFTEMVV, LLGIFLPLITTNCAVLGVALL, ALYGFSAAVGFSLVMVLFAAI, and AIALITAGLMSLAFMGFSGLV.

The protein belongs to the NqrDE/RnfAE family. In terms of assembly, the complex is composed of six subunits: RsxA, RsxB, RsxC, RsxD, RsxE and RsxG.

The protein localises to the cell inner membrane. In terms of biological role, part of a membrane-bound complex that couples electron transfer with translocation of ions across the membrane. Required to maintain the reduced state of SoxR. The chain is Ion-translocating oxidoreductase complex subunit A from Salmonella arizonae (strain ATCC BAA-731 / CDC346-86 / RSK2980).